Consider the following 452-residue polypeptide: MKVISNFQNKKILILGLAKSGEAAAKLLTKLGALVTVNDSKPFDQNPAAQALLEEGIKVICGSHPVELLDEDFEYMVKNPGIPYDNPMVKRALAKEIPILTEVELAYFVSEAPIIGITGSNGKTTTTTMIADVLNAGGQSALLSGNIGYPASKVVQKAIAGDTLVMELSSFQLVGVNAFRPHIAVITNLMPTHLDYHGSFEDYVAAKWMIQAQMTESDYLILNANQEISATLAKTTQATVIPFSTQKVVDGAYLKDGILYFKEQAIIAATDLGVPGSHNIENALATIAVAKLSGIADDIIAQCLSHFGGVKHRLQRVGQIKDITFYNDSKSTNILATQKALSGFDNSRLILIAGGLDRGNEFDDLVPDLLGLKQMIILGESAERMKRAANKAEVSYLEARNVAEATELAFKLAQTGDTILLSPANASWDMYPNFEVRGDEFLATFDCLRGDA.

119-125 provides a ligand contact to ATP; the sequence is GSNGKTT.

This sequence belongs to the MurCDEF family.

Its subcellular location is the cytoplasm. It catalyses the reaction UDP-N-acetyl-alpha-D-muramoyl-L-alanine + D-glutamate + ATP = UDP-N-acetyl-alpha-D-muramoyl-L-alanyl-D-glutamate + ADP + phosphate + H(+). It participates in cell wall biogenesis; peptidoglycan biosynthesis. Its function is as follows. Cell wall formation. Catalyzes the addition of glutamate to the nucleotide precursor UDP-N-acetylmuramoyl-L-alanine (UMA). The chain is UDP-N-acetylmuramoylalanine--D-glutamate ligase from Streptococcus pyogenes serotype M2 (strain MGAS10270).